The chain runs to 451 residues: SH2 domain-containing protein 7 (451 aa).

Residues 51 to 142 (WFHGFITRKQ…PFKEMLTAAC (92 aa)) form the SH2 domain. Disordered regions lie at residues 180–232 (KAAS…SLLE), 256–321 (LGTE…SDAM), and 408–436 (GTPE…THKP). The segment covering 221–232 (SPLPEKSSSLLE) has biased composition (low complexity). Residues 279–291 (EAQRRLSDGEQNR) are compositionally biased toward basic and acidic residues. A compositionally biased stretch (polar residues) spans 306-316 (QGPTESPTSWG). Over residues 426–436 (KSKETGRTHKP) the composition is skewed to basic and acidic residues.

This Homo sapiens (Human) protein is SH2 domain-containing protein 7 (SH2D7).